The primary structure comprises 133 residues: UPF0225 protein BB3385 (133 aa).

It belongs to the UPF0225 family.

In Bordetella bronchiseptica (strain ATCC BAA-588 / NCTC 13252 / RB50) (Alcaligenes bronchisepticus), this protein is UPF0225 protein BB3385.